The chain runs to 627 residues: Anti-CBASS protein Acb1 (627 aa).

Tyr105 lines the 3',3'-cGAMP pocket. A 3',3'-cUAMP-binding site is contributed by Tyr105. The interval 437–474 (LADQPETESANENTEQPESGEEGEEGQPTRRAANDAKP) is disordered. Residues His508, Thr510, His584, and Thr586 contribute to the active site. 3',3'-cGAMP is bound by residues Glu614 and Trp620. 3',3'-cUAMP contacts are provided by Glu614 and Trp620.

It belongs to the anti-CBASS protein Acb1 family.

It catalyses the reaction 3',3'-cUAMP + H2O = U[3'-5']pAp[3'] + H(+). It carries out the reaction 3',3',3'-c-tri-AMP + H2O = A[3'-5']pA[3'-5']pAp[3'] + H(+). The catalysed reaction is 3',3',3'-cAAG + H2O = G[3'-5']pA[3'-5']pAp[3'] + H(+). The enzyme catalyses 3',3',3'-cAAG + H2O = A[3'-5']pG[3'-5']pAp[3'] + H(+). It catalyses the reaction 3',3'-cGAMP + H2O = G[3'-5']pAp[3'] + H(+). Counteracts or regulates the endogenous CBASS antiviral defense system. Phosphodiesterase that enables metal-independent hydrolysis of the host cyclic di- and trinucleotide CBASS signals such as 3'3'-cGAMP, 3'3'cUA, and 3'3'3'-cAAA. This is Anti-CBASS protein Acb1 from Caulobacter sp. (strain RHG1).